A 906-amino-acid chain; its full sequence is Glutamate receptor 1 (906 aa).

An N-terminal signal peptide occupies residues 1–18; sequence MQHIFAFFCTGFLGAVVG. The Extracellular portion of the chain corresponds to 19–536; the sequence is ANFPNNIQIG…GVFSFLDPLA (518 aa). 6 N-linked (GlcNAc...) asparagine glycosylation sites follow: Asn63, Asn249, Asn257, Asn363, Asn401, and Asn406. A disulfide bridge connects residues Cys75 and Cys323. The L-glutamate site is built by Pro492, Thr494, and Arg499. Residues 537–557 traverse the membrane as a helical segment; sequence YEIWMCIVFAYIGVSVVLFLV. At 558–584 the chain is on the cytoplasmic side; sequence SRFSPYEWHSEEFEEGRDQTTSDQSNE. Residues 585–600 constitute an intramembrane region (helical; Pore-forming); the sequence is FGIFNSLWFSLGAFMQ. An intramembrane segment occupies 601–603; sequence QGC. Residue Cys603 is the site of S-palmitoyl cysteine attachment. The Cytoplasmic segment spans residues 604 to 609; the sequence is DISPRS. The helical transmembrane segment at 610–630 threads the bilayer; the sequence is LSGRIVGGVWWFFTLIIISSY. The Extracellular portion of the chain corresponds to 631 to 805; sequence TANLAAFLTV…DKTSALSLSN (175 aa). Phosphoserine is present on Ser645. 2 residues coordinate L-glutamate: Ser668 and Thr669. Ser710 bears the Phosphoserine mark. Glu719 lines the L-glutamate pocket. A disulfide bridge links Cys732 with Cys787. A helical transmembrane segment spans residues 806–826; sequence VAGVFYILIGGLGLAMLVALI. Residues 827 to 906 are Cytoplasmic-facing; sequence EFCYKSRSES…SGMPLGATGL (80 aa). A lipid anchor (S-palmitoyl cysteine) is attached at Cys829. 2 positions are modified to phosphoserine: Ser849 and Ser863. The disordered stretch occupies residues 861–880; it reads RNSGAGASSAGSGENGRVVS. Residues 863–872 show a composition bias toward low complexity; the sequence is SGAGASSAGS. The PDZ-binding motif lies at 903–906; that stretch reads ATGL.

The protein belongs to the glutamate-gated ion channel (TC 1.A.10.1) family. GRIA1 subfamily. In terms of assembly, homotetramer or heterotetramer of pore-forming glutamate receptor subunits; heteromeric assembly can be the result of both receptor subtype and flip-flop forms and according the composition, one partner can be dominant with respect to the fast desensitizing current component, whereas the other can determine the steady-state component. Tetramers may be formed by the dimerization of dimers. Found in a complex with GRIA2, GRIA3, GRIA4, CNIH2, CNIH3, CACNG2, CACNG3, CACNG4, CACNG5, CACNG7 and CACNG8. Interacts with HIP1 and RASGRF2. Interacts with SYNDIG1 and GRIA2. Interacts with DLG1 (via C-terminus). Interacts with LRFN1. Interacts with PRKG2. Interacts with CNIH2 and CACNG2. Interacts with CACNG5; this interaction modulates the gating. Interacts (via C-terminus) with PDLIM4 (via LIM domain); this interaction as well as the interaction of PDLIM4 with alpha-actinin is required for their colocalization in early endosomes. Interacts with SNX27 (via PDZ domain); the interaction is required for recycling to the plasma membrane when endocytosed and prevent degradation in lysosomes. Interacts (via PDZ-binding motif) with SHANK3 (via PDZ domain). Interacts with CACNG3; associates GRIA1 with the adapter protein complex 4 (AP-4) to target GRIA1 to the somatodendritic compartment of neurons. Interacts with CACNG2; this interaction mediates traffick to the plasma membrane and modulation of desensitization. Interaction with CNIH2 and CNIH3; this interaction promotes expression at the plasma membrane and extensively modulates their gating properties by slowing deactivation and desensitization kinetics. Found in a complex with GRIA2, GRIA3, GRIA4, DLG4, CACNG8 and CNIH2. In terms of processing, phosphorylated at Ser-645. Phosphorylated at Ser-710 by PKC. Phosphorylated at Ser-849 by PKC, PKA and CAMK2. Phosphorylated at Ser-863 by PKC, PKA and PRKG2. Phosphorylation of Ser-863 is reduced by induction of long-term depression and increased by induction of long-term potentiation. Palmitoylated. Depalmitoylated by CPT1C and upon L-glutamate stimulation. ZDHHC3/GODZ specifically palmitoylates Cys-603, which leads to Golgi retention and decreased cell surface expression. In contrast, Cys-829 palmitoylation does not affect cell surface expression but regulates stimulation-dependent endocytosis.

Its subcellular location is the cell membrane. The protein localises to the endoplasmic reticulum membrane. The protein resides in the postsynaptic cell membrane. It localises to the postsynaptic density membrane. It is found in the cell projection. Its subcellular location is the dendrite. The protein localises to the dendritic spine. The protein resides in the early endosome membrane. It localises to the recycling endosome membrane. It is found in the presynapse. Its subcellular location is the synapse. The enzyme catalyses Ca(2+)(in) = Ca(2+)(out). It carries out the reaction Na(+)(in) = Na(+)(out). The catalysed reaction is Mg(2+)(in) = Mg(2+)(out). It catalyses the reaction Li(+)(in) = Li(+)(out). The enzyme catalyses K(+)(in) = K(+)(out). It carries out the reaction Sr(2+)(in) = Sr(2+)(out). Its function is as follows. Ionotropic glutamate receptor that functions as a ligand-gated cation channel, gated by L-glutamate and glutamatergic agonists such as alpha-amino-3-hydroxy-5-methyl-4-isoxazolepropionic acid (AMPA), quisqualic acid, and kainic acid. L-glutamate acts as an excitatory neurotransmitter at many synapses in the central nervous system. Binding of the excitatory neurotransmitter L-glutamate induces a conformation change, leading to the opening of the cation channel, and thereby converts the chemical signal to an electrical impulse upon entry of monovalent and divalent cations such as sodium and calcium. The receptor then desensitizes rapidly and enters in a transient inactive state, characterized by the presence of bound agonist. In the presence of CACNG2 or CACNG4 or CACNG7 or CACNG8, shows resensitization which is characterized by a delayed accumulation of current flux upon continued application of L-glutamate. Calcium (Ca(2+)) permeability depends on subunits composition and, heteromeric channels containing edited GRIA2 subunit are calcium-impermeable. Also permeable to other divalents cations such as strontium(2+) and magnesium(2+) and monovalent cations such as potassium(1+) and lithium(1+). The sequence is that of Glutamate receptor 1 from Macaca fascicularis (Crab-eating macaque).